The chain runs to 231 residues: Ribosomal RNA large subunit methyltransferase E (231 aa).

S-adenosyl-L-methionine is bound by residues glycine 76, tryptophan 78, aspartate 99, aspartate 115, and aspartate 139. Lysine 179 (proton acceptor) is an active-site residue.

The protein belongs to the class I-like SAM-binding methyltransferase superfamily. RNA methyltransferase RlmE family.

The protein resides in the cytoplasm. It carries out the reaction uridine(2552) in 23S rRNA + S-adenosyl-L-methionine = 2'-O-methyluridine(2552) in 23S rRNA + S-adenosyl-L-homocysteine + H(+). In terms of biological role, specifically methylates the uridine in position 2552 of 23S rRNA at the 2'-O position of the ribose in the fully assembled 50S ribosomal subunit. In Bradyrhizobium sp. (strain BTAi1 / ATCC BAA-1182), this protein is Ribosomal RNA large subunit methyltransferase E.